The chain runs to 432 residues: Phosphomethylpyrimidine synthase (432 aa).

Substrate is bound by residues Asn-66, Met-95, Tyr-124, His-163, 185–187 (SRG), 226–229 (DGLR), and Glu-265. His-269 contributes to the Zn(2+) binding site. Tyr-292 lines the substrate pocket. His-333 serves as a coordination point for Zn(2+). [4Fe-4S] cluster-binding residues include Cys-409, Cys-412, and Cys-416.

Belongs to the ThiC family. Requires [4Fe-4S] cluster as cofactor.

It carries out the reaction 5-amino-1-(5-phospho-beta-D-ribosyl)imidazole + S-adenosyl-L-methionine = 4-amino-2-methyl-5-(phosphooxymethyl)pyrimidine + CO + 5'-deoxyadenosine + formate + L-methionine + 3 H(+). It participates in cofactor biosynthesis; thiamine diphosphate biosynthesis. In terms of biological role, catalyzes the synthesis of the hydroxymethylpyrimidine phosphate (HMP-P) moiety of thiamine from aminoimidazole ribotide (AIR) in a radical S-adenosyl-L-methionine (SAM)-dependent reaction. This Thermoanaerobacter pseudethanolicus (strain ATCC 33223 / 39E) (Clostridium thermohydrosulfuricum) protein is Phosphomethylpyrimidine synthase.